Reading from the N-terminus, the 952-residue chain is Protocadherin-20 (952 aa).

The first 60 residues, 1–60 (MRGRGNARSLLVQAVSLRPATWHPCLDMGHLHRPSSRTSHRNLPHVFLLFLFVGPFNCLA), serve as a signal peptide directing secretion. At 61–891 (SYSRATELLY…VESMSCMPTL (831 aa)) the chain is on the extracellular side. Cadherin domains lie at 64 to 210 (RATE…APQF), 211 to 321 (PISE…CPLF), 322 to 536 (IDSQ…APVF), 537 to 640 (LQPL…SPRF), 641 to 743 (INKD…PPLV), and 747 to 864 (QSNM…EPEI). N-linked (GlcNAc...) asparagine glycosylation occurs at Asn135. Residues Asn327 and Asn333 are each glycosylated (N-linked (GlcNAc...) asparagine). N-linked (GlcNAc...) asparagine glycans are attached at residues Asn681, Asn749, Asn804, Asn845, and Asn850. Residues 892–912 (VALSVISLGSITLVTGMGIYI) traverse the membrane as a helical segment. Topologically, residues 913 to 952 (CLRKGKKHHREDDNLEVQIPLKGKIDLCMRERKPVDISNI) are cytoplasmic.

The protein localises to the cell membrane. Potential calcium-dependent cell-adhesion protein. The protein is Protocadherin-20 (Pcdh20) of Mus musculus (Mouse).